Here is a 452-residue protein sequence, read N- to C-terminus: MFKKVLIANRGEIAVRIIRTCQKLNIRTVAIYSEADVDSLHVKHADEAFLIGKPPVAESYLKVDTILEVAKQAGVDAIHPGYGLLSENARFARACVEAGISFIGPSPEVIERMGSKIAARTAMQTAGVPVIPGSDVALADEEEAVHLARKFGYPVMLKASAGGGGIGMQLVRNDEEMRKAFAGNQKRATSFFGDGTMFLEKAVENPRHIEVQIAADHHGHVVHLWERDCSIQRRHQKVVEEAPSPFVDEALREKIGQLAVKAAKAIDYRNLGTVECLVDGEKNIYFLEMNTRLQVEHPVTEEITGIDLVEWQLLIAAGEQLPYAQHEIPLQGHAIEVRIYAEDPVTFFPSPGMIKRFTLPEGEGIRHEYAISEGYKVTPFYDPMVAKLIVSADTRGEAIQRLGRALKQYEIEGIKTNIPMLKQVINHPVFQAGEATTAFVTNHLKVKTGRNP.

The Biotin carboxylation domain maps to 1–445; that stretch reads MFKKVLIANR…TTAFVTNHLK (445 aa). ATP-binding positions include Lys116, Lys158, 164–165, 200–203, His208, and His235; these read GG and EKAV. In terms of domain architecture, ATP-grasp spans 120–317; it reads RTAMQTAGVP…LVEWQLLIAA (198 aa). Residue Lys237 participates in hydrogencarbonate binding. ATP contacts are provided by Glu275 and Glu288. 3 residues coordinate Mg(2+): Glu275, Glu288, and Asn290. 3 residues coordinate Mn(2+): Glu275, Glu288, and Asn290. Residues Arg292, Val295, and Arg338 each contribute to the hydrogencarbonate site. The active site involves Arg292. Arg338 lines the biotin pocket.

In terms of assembly, acetyl-CoA carboxylase is a heterohexamer of biotin carboxyl carrier protein, biotin carboxylase and the two subunits of carboxyl transferase in a 2:2 complex. Mg(2+) is required as a cofactor. It depends on Mn(2+) as a cofactor.

It carries out the reaction N(6)-biotinyl-L-lysyl-[protein] + hydrogencarbonate + ATP = N(6)-carboxybiotinyl-L-lysyl-[protein] + ADP + phosphate + H(+). It participates in lipid metabolism; malonyl-CoA biosynthesis; malonyl-CoA from acetyl-CoA: step 1/1. Functionally, this protein is a component of the acetyl coenzyme A carboxylase complex; first, biotin carboxylase catalyzes the carboxylation of the carrier protein and then the transcarboxylase transfers the carboxyl group to form malonyl-CoA. This chain is Biotin carboxylase (accC), found in Halalkalibacterium halodurans (strain ATCC BAA-125 / DSM 18197 / FERM 7344 / JCM 9153 / C-125) (Bacillus halodurans).